The chain runs to 433 residues: Glutamate-1-semialdehyde 2,1-aminomutase (433 aa).

Residue Lys272 is modified to N6-(pyridoxal phosphate)lysine.

The protein belongs to the class-III pyridoxal-phosphate-dependent aminotransferase family. HemL subfamily. Homodimer. Pyridoxal 5'-phosphate serves as cofactor.

The protein localises to the cytoplasm. It catalyses the reaction (S)-4-amino-5-oxopentanoate = 5-aminolevulinate. It participates in porphyrin-containing compound metabolism; protoporphyrin-IX biosynthesis; 5-aminolevulinate from L-glutamyl-tRNA(Glu): step 2/2. In Magnetococcus marinus (strain ATCC BAA-1437 / JCM 17883 / MC-1), this protein is Glutamate-1-semialdehyde 2,1-aminomutase.